We begin with the raw amino-acid sequence, 316 residues long: L-lactate dehydrogenase (316 aa).

34-39 (DVVEGV) contributes to the NAD(+) binding site. Arg89, Asn121, and Arg152 together coordinate substrate. Asn121 contacts NAD(+). The active-site Proton acceptor is His172.

This sequence belongs to the LDH/MDH superfamily. LDH family. Homotetramer.

The enzyme catalyses (S)-lactate + NAD(+) = pyruvate + NADH + H(+). The protein operates within fermentation; pyruvate fermentation to lactate; (S)-lactate from pyruvate: step 1/1. This Botryococcus braunii (Green alga) protein is L-lactate dehydrogenase.